The chain runs to 246 residues: 2-C-methyl-D-erythritol 4-phosphate cytidylyltransferase (246 aa).

It belongs to the IspD/TarI cytidylyltransferase family. IspD subfamily.

The catalysed reaction is 2-C-methyl-D-erythritol 4-phosphate + CTP + H(+) = 4-CDP-2-C-methyl-D-erythritol + diphosphate. Its pathway is isoprenoid biosynthesis; isopentenyl diphosphate biosynthesis via DXP pathway; isopentenyl diphosphate from 1-deoxy-D-xylulose 5-phosphate: step 2/6. In terms of biological role, catalyzes the formation of 4-diphosphocytidyl-2-C-methyl-D-erythritol from CTP and 2-C-methyl-D-erythritol 4-phosphate (MEP). This is 2-C-methyl-D-erythritol 4-phosphate cytidylyltransferase from Clostridium tetani (strain Massachusetts / E88).